Reading from the N-terminus, the 148-residue chain is Large ribosomal subunit protein bL9 (148 aa).

This sequence belongs to the bacterial ribosomal protein bL9 family.

Binds to the 23S rRNA. The protein is Large ribosomal subunit protein bL9 of Staphylococcus aureus (strain Newman).